The sequence spans 114 residues: Replication initiation control protein YabA (114 aa).

Zn(2+) is bound by residues H84, C86, C102, and C105.

The protein belongs to the YabA family. As to quaternary structure, homotetramer. Interacts with both DnaA and DnaN, acting as a bridge between these two proteins. Zn(2+) serves as cofactor.

It localises to the cytoplasm. The protein localises to the nucleoid. Involved in control of chromosome replication initiation. Inhibits the cooperative binding of DnaA to the oriC region, thus negatively regulating initiation of chromosome replication. Inhibits the ability of DnaA-ATP to form a helix on DNA; does not disassemble preformed DnaA-DNA helices. Decreases the residence time of DnaA on the chromosome at its binding sites (oriC, replication forks and promoter-binding sites). Tethers DnaA to the replication machinery via the DNA polymerase beta sliding clamp subunit (dnaN). Associates with oriC and other DnaA targets on the chromosome in a DnaA-dependent manner. The protein is Replication initiation control protein YabA of Ligilactobacillus salivarius (strain UCC118) (Lactobacillus salivarius).